An 832-amino-acid chain; its full sequence is Mechanosensitive cation channel TMEM63B (832 aa).

Residues 1-40 (MLPFLLATLGTAALNSSNPKDYCYSARIRSTVLQGLPFGG) lie on the Extracellular side of the membrane. Residues 41 to 65 (VPTVLALDFMCFLALLFLFSILRKV) form a helical membrane-spanning segment. Cys51 is lipidated: S-palmitoyl cysteine. Over 66-145 (AWDYGRLALV…KDDEIRDKCG (80 aa)) the chain is Cytoplasmic. Residues 86-88 (RER) carry the Mediates endoplasmic reticulum retention motif. Phosphoserine occurs at positions 111, 113, 114, and 115. The S-palmitoyl cysteine moiety is linked to residue Cys126. A helical transmembrane segment spans residues 146 to 178 (GDAVHYLSFQRHIIGLLVVVGVLSVGIVLPVNF). Residues 179-202 (SGDLLENNAYSFGRTTIANLKSGN) are Extracellular-facing. A helical transmembrane segment spans residues 203–227 (NLLWLHTSFAFLYLLLTVYSMRRHT). Residues 228-427 (SKMRYKEDDL…IYWEHLSIRG (200 aa)) lie on the Cytoplasmic side of the membrane. The segment at 231 to 426 (RYKEDDLVKR…NIYWEHLSIR (196 aa)) is intracellular linker IL2; confers mechanosensitivity. S-palmitoyl cysteine attachment occurs at residues Cys382 and Cys398. Residues 428 to 457 (FIWWLRCLVINVVLFILLFFLTTPAIIITT) form a helical membrane-spanning segment. Residues 458 to 472 (MDKFNVTKPVEYLNN) are Extracellular-facing. Asn462 carries N-linked (GlcNAc...) asparagine glycosylation. The chain crosses the membrane as a helical span at residues 473–502 (PIITQFFPTLLLWCFSALLPTIVYYSAFFE). The Cytoplasmic segment spans residues 503–506 (AHWT). The helical transmembrane segment at 507–543 (RSGENRTTMHKCYTFLIFMVLLLPSLGLSSLDLFFRW) threads the bilayer. Topologically, residues 544–566 (LFDKKFLAEAAIRFECVFLPDNG) are extracellular. The helical transmembrane segment at 567 to 599 (AFFVNYVIASAFIGNAMDLLRIPGLLMYMIRLC) threads the bilayer. The segment at 567–599 (AFFVNYVIASAFIGNAMDLLRIPGLLMYMIRLC) is gating helix. The Cytoplasmic segment spans residues 600 to 619 (LARSAAERRNVKRHQAYEFQ). Residues 620-638 (FGAAYAWMMCVFTVVMTYS) form a helical membrane-spanning segment. The Extracellular portion of the chain corresponds to 639–641 (ITC). Residues 642 to 666 (PIIVPFGLMYMLLKHLVDRYNLYYA) form a helical membrane-spanning segment. Residues 667–673 (YLPAKLD) lie on the Cytoplasmic side of the membrane. The helical transmembrane segment at 674 to 702 (KKIHSGAVNQVVAAPILCLFWLLFFSTMR) threads the bilayer. Residues 703 to 707 (TGFLA) are Extracellular-facing. Residues 708-728 (PTSMFTFVVLVITIVICLCHV) form a helical membrane-spanning segment. 2 S-palmitoyl cysteine lipidation sites follow: Cys726 and Cys729. Topologically, residues 729 to 832 (CFGHFKYLSA…DSLIENEIHQ (104 aa)) are cytoplasmic. Disordered stretches follow at residues 748-767 (TDAV…AVPK) and 776-818 (LQDS…DTDF). Over residues 749–758 (DAVSSRSNGR) the composition is skewed to polar residues. The segment covering 789–801 (PGSSGDEPPSSSS) has biased composition (low complexity).

Belongs to the CSC1 (TC 1.A.17) family. In terms of assembly, monomer. Interacts with SLC19A2; interaction is required for the phospholipid scramblase activity. In terms of processing, palmitoylation is required for localization to the plasma membrane and stability. In terms of tissue distribution, expressed in cochlear hair cells (at protein level). Highly expressed in the subfornical organ of the brain. Expressed in small intestine. Brain-specific.

Its subcellular location is the cell membrane. It localises to the endoplasmic reticulum membrane. It is found in the lysosome membrane. The protein resides in the early endosome membrane. The catalysed reaction is Ca(2+)(in) = Ca(2+)(out). It catalyses the reaction Mg(2+)(in) = Mg(2+)(out). It carries out the reaction K(+)(in) = K(+)(out). The enzyme catalyses Na(+)(in) = Na(+)(out). The catalysed reaction is Cs(+)(in) = Cs(+)(out). It catalyses the reaction a 1,2-diacyl-sn-glycero-3-phosphocholine(in) = a 1,2-diacyl-sn-glycero-3-phosphocholine(out). It carries out the reaction a sphingomyelin(in) = a sphingomyelin(out). Mechanosensitive cation channel with low conductance and high activation threshold. Osmosensitive cation channel preferentially activated by hypotonic stress. Also acts as a phospholipid scramblase in response to changes in membrane structure: upon changes in membrane curvature and thickness, alters its conformation and translocates phospholipids, such as phosphatidylcholine and sphingomyelin, thereby controlling plasma membrane lipid distribution. Forms a heterodimer with SLC19A2, which mediates phospholipid scramblase activity following Ca(2+) stimulation. Expressed in excitatory neurons of the subfornical organ and functions as a thirst receptor that mediates neuronal response to hyperosmolality to drive thirst and drinking behavior. Facilitates intestinal motility by promoting proliferation of intestinal stem cells. Essential for the baby's first breath and respiration throughout life. Upon lung inflation conducts cation currents in alveolar type 1 and 2 cells triggering lamellar body exocytosis and surfactant secretion into airspace. Acts as an osmosensor in cochlear outer hair cells (OHCs) where it mediates calcium influx and regulatory volume decrease response. Required for the maintenance of OHC morphology, OHC survival and normal hearing. Functionally, brain-specific osmosensitive calcium channel isoform. This chain is Mechanosensitive cation channel TMEM63B, found in Mus musculus (Mouse).